Here is a 354-residue protein sequence, read N- to C-terminus: Rhodopsin (354 aa).

The Extracellular portion of the chain corresponds to 1–36; it reads MNGTEGENFYVPMSNKTGVVRSPFDYPQYYLGEPWM. Asn-2 and Asn-15 each carry an N-linked (GlcNAc...) asparagine glycan. Residues 37–61 traverse the membrane as a helical segment; sequence FSALAAYMFFLILTGLPVNFLTLFV. Topologically, residues 62 to 73 are cytoplasmic; the sequence is TIQHKKLRQPLN. Residues 74-96 form a helical membrane-spanning segment; it reads YILLNLAVSDLFMVFGGFTTTII. The Extracellular portion of the chain corresponds to 97–110; it reads TSMNGYFIFGPAGC. Cysteines 110 and 187 form a disulfide. The helical transmembrane segment at 111-133 threads the bilayer; sequence NFEGFFATLGGEVGLWCLVVLAI. A 'Ionic lock' involved in activated form stabilization motif is present at residues 134–136; sequence ERY. The Cytoplasmic segment spans residues 134–152; that stretch reads ERYMVVCKPMANFRFGSQH. Residues 153–173 form a helical membrane-spanning segment; sequence AIIGVVFTWIMALSCAGPPLV. At 174 to 202 the chain is on the extracellular side; that stretch reads GWSRYIPEGLQCSCGVDYYTMKPEVNNES. A helical transmembrane segment spans residues 203–224; the sequence is FVIYMFVVHFTIPLIVIFFCYG. Residues 225 to 252 lie on the Cytoplasmic side of the membrane; sequence RLVCTVKEAAAQQQESESTQRAEREVTR. The helical transmembrane segment at 253 to 274 threads the bilayer; it reads MVIIMVVAFLICWVPYASVAFY. The Extracellular portion of the chain corresponds to 275–286; sequence IFINQGCDFTPF. The chain crosses the membrane as a helical span at residues 287–308; that stretch reads FMTVPAFFAKSSAVYNPLIYIL. Position 296 is an N6-(retinylidene)lysine (Lys-296). At 309–354 the chain is on the cytoplasmic side; it reads MNKQFRNCMITTICLGKNPFEEEESTSASASKTEASSVSSSQVAPA. The S-palmitoyl cysteine moiety is linked to residue Cys-322. The tract at residues 333–354 is disordered; that stretch reads STSASASKTEASSVSSSQVAPA. Residues 334–354 show a composition bias toward low complexity; sequence TSASASKTEASSVSSSQVAPA.

It belongs to the G-protein coupled receptor 1 family. Opsin subfamily. Phosphorylated on some or all of the serine and threonine residues present in the C-terminal region. In terms of processing, contains one covalently linked retinal chromophore.

It is found in the membrane. It localises to the cell projection. The protein resides in the cilium. Its subcellular location is the photoreceptor outer segment. Photoreceptor required for image-forming vision at low light intensity. While most salt water fish species use retinal as chromophore, most freshwater fish use 3-dehydroretinal, or a mixture of retinal and 3-dehydroretinal. Light-induced isomerization of 11-cis to all-trans retinal triggers a conformational change that activates signaling via G-proteins. Subsequent receptor phosphorylation mediates displacement of the bound G-protein alpha subunit by arrestin and terminates signaling. The sequence is that of Rhodopsin (rho) from Leucoraja erinaceus (Little skate).